A 197-amino-acid chain; its full sequence is GTP cyclohydrolase-2 (197 aa).

A GTP-binding site is contributed by 49-53; it reads RVHSE. Residues Cys54, Cys65, and Cys67 each contribute to the Zn(2+) site. GTP-binding positions include Gln70, 92–94, and Thr114; that span reads EGR. Catalysis depends on Asp126, which acts as the Proton acceptor. The active-site Nucleophile is Arg128. GTP-binding residues include Thr149 and Lys154.

Belongs to the GTP cyclohydrolase II family. In terms of assembly, homodimer. Zn(2+) serves as cofactor.

It carries out the reaction GTP + 4 H2O = 2,5-diamino-6-hydroxy-4-(5-phosphoribosylamino)-pyrimidine + formate + 2 phosphate + 3 H(+). Its pathway is cofactor biosynthesis; riboflavin biosynthesis; 5-amino-6-(D-ribitylamino)uracil from GTP: step 1/4. Functionally, catalyzes the conversion of GTP to 2,5-diamino-6-ribosylamino-4(3H)-pyrimidinone 5'-phosphate (DARP), formate and pyrophosphate. In Cronobacter sakazakii (strain ATCC BAA-894) (Enterobacter sakazakii), this protein is GTP cyclohydrolase-2.